A 248-amino-acid polypeptide reads, in one-letter code: Ribosomal RNA small subunit methyltransferase G (248 aa).

S-adenosyl-L-methionine is bound by residues G85, F90, 108 to 110 (DSS), 137 to 138 (AE), and R156.

It belongs to the methyltransferase superfamily. RNA methyltransferase RsmG family.

The protein localises to the cytoplasm. Functionally, specifically methylates the N7 position of a guanine in 16S rRNA. The polypeptide is Ribosomal RNA small subunit methyltransferase G (Prochlorococcus marinus (strain NATL1A)).